An 867-amino-acid chain; its full sequence is Elongation factor 2 (867 aa).

The tr-type G domain maps to 17–368 (HNIRNLSVVA…MIVLHLPSPV (352 aa)). Position 26–33 (26–33 (AHVDHGKS)) interacts with GTP. Phosphothreonine is present on residues T57 and T59. Residues 176–179 (NKLD) and 231–233 (SGL) each bind GTP. H723 bears the Diphthamide mark.

Belongs to the TRAFAC class translation factor GTPase superfamily. Classic translation factor GTPase family. EF-G/EF-2 subfamily. In terms of processing, phosphorylation by EF-2 kinase completely inactivates EF-2.

The protein localises to the cytoplasm. It catalyses the reaction GTP + H2O = GDP + phosphate + H(+). Its function is as follows. Catalyzes the GTP-dependent ribosomal translocation step during translation elongation. During this step, the ribosome changes from the pre-translocational (PRE) to the post-translocational (POST) state as the newly formed A-site-bound peptidyl-tRNA and P-site-bound deacylated tRNA move to the P and E sites, respectively. Catalyzes the coordinated movement of the two tRNA molecules, the mRNA and conformational changes in the ribosome. The chain is Elongation factor 2 from Blastocystis hominis.